The chain runs to 33 residues: Dermonecrotic toxin LbSicTox-alphaIB1b (33 aa).

Residue His-11 is part of the active site. Glu-31 and Asp-33 together coordinate Mg(2+).

Belongs to the arthropod phospholipase D family. Class II subfamily. The cofactor is Mg(2+). In terms of processing, contains 2 disulfide bonds. As to expression, expressed by the venom gland.

The protein localises to the secreted. The catalysed reaction is an N-(acyl)-sphingosylphosphocholine = an N-(acyl)-sphingosyl-1,3-cyclic phosphate + choline. It catalyses the reaction an N-(acyl)-sphingosylphosphoethanolamine = an N-(acyl)-sphingosyl-1,3-cyclic phosphate + ethanolamine. It carries out the reaction a 1-acyl-sn-glycero-3-phosphocholine = a 1-acyl-sn-glycero-2,3-cyclic phosphate + choline. The enzyme catalyses a 1-acyl-sn-glycero-3-phosphoethanolamine = a 1-acyl-sn-glycero-2,3-cyclic phosphate + ethanolamine. Dermonecrotic toxins cleave the phosphodiester linkage between the phosphate and headgroup of certain phospholipids (sphingolipid and lysolipid substrates), forming an alcohol (often choline) and a cyclic phosphate. This toxin acts on sphingomyelin (SM) with high activity (9.5 U/mg). It may also act on ceramide phosphoethanolamine (CPE), lysophosphatidylcholine (LPC) and lysophosphatidylethanolamine (LPE), but not on lysophosphatidylserine (LPS), and lysophosphatidylglycerol (LPG). It acts by transphosphatidylation, releasing exclusively cyclic phosphate products as second products. Induces dermonecrosis, hemolysis, increased vascular permeability, edema, inflammatory response, and platelet aggregation. This Loxosceles boneti (North American fiddleback spider) protein is Dermonecrotic toxin LbSicTox-alphaIB1b.